Reading from the N-terminus, the 227-residue chain is ATP-dependent dethiobiotin synthetase BioD (227 aa).

ATP is bound at residue 13–18 (EVGKSV). Serine 17 contributes to the Mg(2+) binding site. Lysine 38 is a catalytic residue. A substrate-binding site is contributed by serine 42. Residues aspartate 55, 116–119 (EGAG), and 176–177 (ND) each bind ATP. 2 residues coordinate Mg(2+): aspartate 55 and glutamate 116.

Belongs to the dethiobiotin synthetase family. Homodimer. It depends on Mg(2+) as a cofactor.

The protein localises to the cytoplasm. It catalyses the reaction (7R,8S)-7,8-diammoniononanoate + CO2 + ATP = (4R,5S)-dethiobiotin + ADP + phosphate + 3 H(+). It participates in cofactor biosynthesis; biotin biosynthesis; biotin from 7,8-diaminononanoate: step 1/2. Functionally, catalyzes a mechanistically unusual reaction, the ATP-dependent insertion of CO2 between the N7 and N8 nitrogen atoms of 7,8-diaminopelargonic acid (DAPA, also called 7,8-diammoniononanoate) to form a ureido ring. This chain is ATP-dependent dethiobiotin synthetase BioD, found in Serratia marcescens.